Here is a 245-residue protein sequence, read N- to C-terminus: 3-deoxy-manno-octulosonate cytidylyltransferase (245 aa).

Belongs to the KdsB family.

Its subcellular location is the cytoplasm. The enzyme catalyses 3-deoxy-alpha-D-manno-oct-2-ulosonate + CTP = CMP-3-deoxy-beta-D-manno-octulosonate + diphosphate. The protein operates within nucleotide-sugar biosynthesis; CMP-3-deoxy-D-manno-octulosonate biosynthesis; CMP-3-deoxy-D-manno-octulosonate from 3-deoxy-D-manno-octulosonate and CTP: step 1/1. It functions in the pathway bacterial outer membrane biogenesis; lipopolysaccharide biosynthesis. In terms of biological role, activates KDO (a required 8-carbon sugar) for incorporation into bacterial lipopolysaccharide in Gram-negative bacteria. The polypeptide is 3-deoxy-manno-octulosonate cytidylyltransferase (Rhodopseudomonas palustris (strain BisB18)).